The chain runs to 210 residues: MWTLGRRAVAGLLASPSPAQAQTLTRVPRPAELAPLCGRRGLRTDIDATCTPRRASSNQRGLNQIWNVKKQSVYLMNLRKSGTLGHPGSLDETTYERLAEETLDSLAEFFEDLADKPYTFEDYDVSFGSGVLTVKLGGDLGTYVINKQTPNKQIWLSSPSSGPKRYDWTGKNWVYSHDGVSLHELLAAELTKALKTKLDLSSLAYSGKDA.

Residues 1 to 41 (MWTLGRRAVAGLLASPSPAQAQTLTRVPRPAELAPLCGRRG) constitute a mitochondrion transit peptide.

This sequence belongs to the frataxin family. In terms of assembly, component of the mitochondrial core iron-sulfur cluster (ISC) complex composed of NFS1, LYRM4, NDUFAB1, ISCU, FXN, and FDX2; this complex is a heterohexamer containing two copies of each monomer. Homodimer. Monomer (probable predominant form). Oligomer. Monomers and polymeric aggregates of &gt;1 MDa have been isolated from mitochondria. A small fraction of heterologous overexpressed recombinant frataxin forms high-molecular weight aggregates that incorporate iron. Interacts with LYRM4. Interacts (via ferrous form) with ISCU; the interaction is possible when both are bound to the dimeric form of the cysteine desulfurase complex (NFS1:LYRM4) and the interaction enhances FXN interaction to the dimeric form of the cysteine desulfurase complex (NFS1:LYRM4). Interacts with FECH; one iron-bound FXN monomer seems to interact with a FECH homodimer. Interacts with SDHA and SDHB. Interacts with ACO2; the interaction is dependent on citrate. Interacts with HSPA9. As to quaternary structure, interacts with ACO1. Interacts with ISCU (cytoplasmic form). In terms of processing, processed in two steps by mitochondrial processing peptidase (MPP). MPP first cleaves the precursor to intermediate form and subsequently converts the intermediate to yield frataxin mature form (frataxin(81-210)) which is the predominant form. The additional forms, frataxin(56-210) and frataxin(78-210), seem to be produced when the normal maturation process is impaired; their physiological relevance is unsure. As to expression, expressed in the heart, peripheral blood lymphocytes and dermal fibroblasts.

The protein resides in the mitochondrion. It localises to the cytoplasm. The protein localises to the cytosol. It carries out the reaction 4 Fe(2+) + O2 + 4 H(+) = 4 Fe(3+) + 2 H2O. In terms of biological role, functions as an activator of persulfide transfer to the scaffoding protein ISCU as component of the core iron-sulfur cluster (ISC) assembly complex and participates to the [2Fe-2S] cluster assembly. Accelerates sulfur transfer from NFS1 persulfide intermediate to ISCU and to small thiols such as L-cysteine and glutathione leading to persulfuration of these thiols and ultimately sulfide release. Binds ferrous ion and is released from FXN upon the addition of both L-cysteine and reduced FDX2 during [2Fe-2S] cluster assembly. The core iron-sulfur cluster (ISC) assembly complex is involved in the de novo synthesis of a [2Fe-2S] cluster, the first step of the mitochondrial iron-sulfur protein biogenesis. This process is initiated by the cysteine desulfurase complex (NFS1:LYRM4:NDUFAB1) that produces persulfide which is delivered on the scaffold protein ISCU in a FXN-dependent manner. Then this complex is stabilized by FDX2 which provides reducing equivalents to accomplish the [2Fe-2S] cluster assembly. Finally, the [2Fe-2S] cluster is transferred from ISCU to chaperone proteins, including HSCB, HSPA9 and GLRX5. May play a role in the protection against iron-catalyzed oxidative stress through its ability to catalyze the oxidation of Fe(2+) to Fe(3+); the oligomeric form but not the monomeric form has in vitro ferroxidase activity. May be able to store large amounts of iron in the form of a ferrihydrite mineral by oligomerization; however, the physiological relevance is unsure as reports are conflicting and the function has only been shown using heterologous overexpression systems. May function as an iron chaperone protein that protects the aconitase [4Fe-4S]2+ cluster from disassembly and promotes enzyme reactivation. May play a role as a high affinity iron binding partner for FECH that is capable of both delivering iron to ferrochelatase and mediating the terminal step in mitochondrial heme biosynthesis. Its function is as follows. Modulates the RNA-binding activity of ACO1. May be involved in the cytoplasmic iron-sulfur protein biogenesis. May contribute to oxidative stress resistance and overall cell survival. The sequence is that of Frataxin, mitochondrial from Homo sapiens (Human).